The sequence spans 354 residues: Uroporphyrinogen decarboxylase (354 aa).

Substrate is bound by residues 27-31, Asp77, Tyr154, Thr209, and His327; that span reads RQAGR.

Belongs to the uroporphyrinogen decarboxylase family. As to quaternary structure, homodimer.

The protein resides in the cytoplasm. It catalyses the reaction uroporphyrinogen III + 4 H(+) = coproporphyrinogen III + 4 CO2. It participates in porphyrin-containing compound metabolism; protoporphyrin-IX biosynthesis; coproporphyrinogen-III from 5-aminolevulinate: step 4/4. Its function is as follows. Catalyzes the decarboxylation of four acetate groups of uroporphyrinogen-III to yield coproporphyrinogen-III. This is Uroporphyrinogen decarboxylase from Escherichia coli (strain 55989 / EAEC).